The following is a 423-amino-acid chain: Protein disulfide isomerase-like 5-2 (423 aa).

Residues 1–35 form the signal peptide; the sequence is MAATTTRPLPLLLLLLLPPLLLLLLSFHAAAAAAA. In terms of domain architecture, Thioredoxin spans 36–149; that stretch reads EEFPRDGRVI…LVRNLNKFVA (114 aa). Catalysis depends on nucleophile residues cysteine 71 and cysteine 74. Cysteine 71 and cysteine 74 are disulfide-bonded. A glycan (N-linked (GlcNAc...) asparagine) is linked at asparagine 181. A helical transmembrane segment spans residues 386–406; it reads LVSLNSLYILICVFALLGVMI.

Belongs to the protein disulfide isomerase family.

The protein localises to the membrane. Its function is as follows. Acts as a protein-folding catalyst that interacts with nascent polypeptides to catalyze the formation, isomerization, and reduction or oxidation of disulfide bonds. May play a role in storage protein biogenesis. This Oryza sativa subsp. japonica (Rice) protein is Protein disulfide isomerase-like 5-2 (PDIL5-2).